The primary structure comprises 782 residues: Spastin (782 aa).

Residues M1–S103 are disordered. Topologically, residues M1–P115 are cytoplasmic. Residues M1 to G212 form a required for localization to punctate cytoplasmic foci region. Over residues S8 to S19 the composition is skewed to low complexity. Residues G25–C34 are compositionally biased toward polar residues. 2 stretches are compositionally biased toward low complexity: residues S44–P75 and T84–S93. The segment at residues I116 to Y136 is an intramembrane region (helical). Over L137–I782 the chain is Cytoplasmic. Residues M210 to I782 form a sufficient for interaction with microtubules and microtubule severing region. An MIT domain is found at H235–L310. The interval K325–M479 is disordered. Residues P334–Q343 are compositionally biased toward low complexity. Composition is skewed to polar residues over residues N408–V426 and Q447–I463. Positions N465–M479 are required for interaction with microtubules. Position 547-554 (G547–T554) interacts with ATP.

This sequence belongs to the AAA ATPase family. Spastin subfamily. As to quaternary structure, homohexamer. The homohexamer is stabilized by ATP-binding. The homohexamer may adopt a ring conformation through which microtubules pass prior to being severed. Interacts with microtubules. Interacts with atl; may be involved in microtubule dynamics.

It localises to the membrane. It is found in the cytoplasm. The protein resides in the cytoskeleton. Its subcellular location is the microtubule organizing center. The protein localises to the centrosome. It localises to the chromosome. It is found in the lipid droplet. The catalysed reaction is n ATP + n H2O + a microtubule = n ADP + n phosphate + (n+1) alpha/beta tubulin heterodimers.. In terms of biological role, ATP-dependent microtubule severing protein. Stimulates microtubule minus-end depolymerization and poleward microtubule flux in the mitotic spindle. Regulates microtubule stability in the neuromuscular junction synapse. Involved in lipid metabolism by regulating the size and distribution of lipid droplets. Involved in axon regeneration by regulating microtubule severing. The protein is Spastin of Drosophila grimshawi (Hawaiian fruit fly).